A 723-amino-acid polypeptide reads, in one-letter code: Delta-like protein 1 (723 aa).

Residues 1 to 17 (MGSRCALALAVLSALLC) form the signal peptide. Over 18 to 545 (QVWSSGVFEL…LEGQGGPFPW (528 aa)) the chain is Extracellular. The DSL domain occupies 177–221 (FVCDEHYYGEGCSVFCRPRDDAFGHFTCGERGEKVCNPGWKGPYC). Cystine bridges form between Cys-179/Cys-188, Cys-192/Cys-204, Cys-212/Cys-221, Cys-226/Cys-237, Cys-230/Cys-243, Cys-245/Cys-254, Cys-257/Cys-268, Cys-263/Cys-274, Cys-276/Cys-285, Cys-292/Cys-304, Cys-298/Cys-314, Cys-316/Cys-325, Cys-332/Cys-343, Cys-337/Cys-352, Cys-354/Cys-363, Cys-370/Cys-381, Cys-375/Cys-391, Cys-393/Cys-402, Cys-409/Cys-420, Cys-414/Cys-429, Cys-431/Cys-440, Cys-447/Cys-458, Cys-452/Cys-467, Cys-469/Cys-478, Cys-485/Cys-496, Cys-490/Cys-505, and Cys-507/Cys-516. EGF-like domains are found at residues 226 to 254 (CLPG…GRYC), 257 to 285 (CIRY…GLFC), and 292 to 325 (CTHH…GATC). The region spanning 332 to 363 (CDPSPCKNGGSCTDLENSYSCTCPPGFYGKIC) is the EGF-like 4; calcium-binding domain. EGF-like domains lie at 370–402 (CADG…GFNC) and 409–440 (CSSS…GRHC). Residues 447–478 (CASSPCANGGTCRDGVNDFSCTCPPGYTGRNC) form the EGF-like 7; calcium-binding domain. Residue Asn-477 is glycosylated (N-linked (GlcNAc...) asparagine). The 32-residue stretch at 485–516 (CEHAPCHNGATCHERGHRYVCECARGYGGPNC) folds into the EGF-like 8 domain. Residues 546–568 (VAVCAGVILVLMLLLGCAAVVVC) form a helical membrane-spanning segment. The Cytoplasmic portion of the chain corresponds to 569–723 (VRLRLQKHRP…KDECVIATEV (155 aa)). A Glycyl lysine isopeptide (Lys-Gly) (interchain with G-Cter in ubiquitin) cross-link involves residue Lys-613. The span at 653–664 (AVRDAHSKRDTK) shows a compositional bias: basic and acidic residues. Residues 653–702 (AVRDAHSKRDTKCQPQGSSGEEKGTPTTLRGGEASERKRPDSGCSTSKDT) form a disordered region. Ser-694 is subject to Phosphoserine; by PKB. Ser-697 carries the phosphoserine modification. The interval 720 to 723 (ATEV) is interaction with MAGI1.

Homodimer. Interacts with TJP1. Interacts with MAGI1 (via PDZ domain); forms a complex with CTNNB1 and CDH2 and promotes recruitment to the adherens junction and stabilization on the cell surface. Interacts with PSEN1; undergoes a presenilin-dependent gamma-secretase cleavage that releases a Dll1-intracellular form. Interacts with MFAP5. Interacts with MIB1. Interacts with NEURL1B; leads to ubiquitination. Interacts with NEURL1. Interacts with SYNJ2BP; enhances DLL1 protein stability, and promotes Notch signaling in endothelial cells. Interacts with MAGI1, MAGI2, MAGI3 and MPDZ. Interacts (via ubiquitin) with EPN1 (via IUM domain); binding with NOTCH1 attached to neighboring cell, promotes ligand ubiquitination and EPN1 interaction, leading to NECD transendocytosis and Notch signaling. Interacts with NOTCH1. Interacts with NOTCH2NLB; leading to promote Notch signaling pathway in a cell-autonomous manner through inhibition of cis DLL1-NOTCH2 interactions. Ubiquitinated by MIB (MIB1 or MIB2), leading to its endocytosis and subsequent degradation. Ubiquitinated; promotes recycling back to the plasma membrane and confers a strong affinity for NOTCH1. Multi-ubiquitination of Lys-613 by MIB1 promotes both cis and trans-interaction with NOTCH1, as well as activation of Notch signaling. Ubiquitinated by NEURL1B. Post-translationally, phosphorylated in a membrane association-dependent manner. Phosphorylation at Ser-697 requires the presence of Ser-694, whereas phosphorylation at Ser-694 occurs independently of the other site. Phosphorylation is required for full ligand activity in vitro and affects surface presentation, ectodomain shedding, and endocytosis. In terms of processing, O-fucosylated. Can be elongated to a disaccharide by MFNG. In terms of tissue distribution, expressed in heart and pancreas, with lower expression in brain and muscle and almost no expression in placenta, lung, liver and kidney.

It is found in the apical cell membrane. The protein localises to the cell junction. It localises to the adherens junction. Its subcellular location is the membrane raft. Transmembrane ligand protein of NOTCH1, NOTCH2 and NOTCH3 receptors that binds the extracellular domain (ECD) of Notch receptor in a cis and trans fashion manner. Following transinteraction, ligand cells produce mechanical force that depends of a clathrin-mediated endocytosis, requiring ligand ubiquitination, EPN1 interaction, and actin polymerisation; these events promote Notch receptor extracellular domain (NECD) transendocytosis and triggers Notch signaling through induction of cleavage, hyperphosphorylation, and nuclear accumulation of the intracellular domain of Notch receptors (NICD). Is required for embryonic development and maintenance of adult stem cells in many different tissues and immune systeme; the DLL1-induced Notch signaling is mediated through an intercellular communication that regulates cell lineage, cell specification, cell patterning and morphogenesis through effects on differentiation and proliferation. Plays a role in brain development at different level, namely by regulating neuronal differentiation of neural precursor cells via cell-cell interaction, most likely through the lateral inhibitory system in an endogenous level dependent-manner. During neocortex development, Dll1-Notch signaling transmission is mediated by dynamic interactions between intermediate neurogenic progenitors and radial glia; the cell-cell interactions are mediated via dynamic and transient elongation processes, likely to reactivate/maintain Notch activity in neighboring progenitors, and coordinate progenitor cell division and differentiation across radial and zonal boundaries. During cerebellar development, regulates Bergmann glial monolayer formation and its morphological maturation through a Notch signaling pathway. At the retina and spinal cord level, regulates neurogenesis by preventing the premature differentiation of neural progenitors and also by maintaining progenitors in spinal cord through Notch signaling pathway. Also controls neurogenesis of the neural tube in a progenitor domain-specific fashion along the dorsoventral axis. Maintains quiescence of neural stem cells and plays a role as a fate determinant that segregates asymmetrically to one daughter cell during neural stem cells mitosis, resulting in neuronal differentiation in Dll1-inheriting cell. Plays a role in immune systeme development, namely the development of all T-cells and marginal zone (MZ) B-cells. Blocks the differentiation of progenitor cells into the B-cell lineage while promoting the emergence of a population of cells with the characteristics of a T-cell/NK-cell precursor. Also plays a role during muscle development. During early development, inhibits myoblasts differentiation from the medial dermomyotomal lip and later regulates progenitor cell differentiation. Directly modulates cell adhesion and basal lamina formation in satellite cells through Notch signaling. Maintains myogenic progenitors pool by suppressing differentiation through down-regulation of MYOD1 and is required for satellite cell homing and PAX7 expression. During craniofacial and trunk myogenesis suppresses differentiation of cranial mesoderm-derived and somite-derived muscle via MYOD1 regulation but in cranial mesoderm-derived progenitors, is neither required for satellite cell homing nor for PAX7 expression. Also plays a role during pancreatic cell development. During type B pancreatic cell development, may be involved in the initiation of proximodistal patterning in the early pancreatic epithelium. Stimulates multipotent pancreatic progenitor cells proliferation and pancreatic growth by maintaining HES1 expression and PTF1A protein levels. During fetal stages of development, is required to maintain arterial identity and the responsiveness of arterial endothelial cells for VEGFA through regulation of KDR activation and NRP1 expression. Controls sprouting angiogenesis and subsequent vertical branch formation through regulation on tip cell differentiation. Negatively regulates goblet cell differentiation in intestine and controls secretory fat commitment through lateral inhibition in small intestine. Plays a role during inner ear development; negatively regulates auditory hair cell differentiation. Plays a role during nephron development through Notch signaling pathway. Regulates growth, blood pressure and energy homeostasis. The sequence is that of Delta-like protein 1 from Homo sapiens (Human).